The primary structure comprises 125 residues: Scinderin (125 aa).

Y13 is subject to Phosphotyrosine. A 1,2-diacyl-sn-glycero-3-phospho-(1D-myo-inositol-4,5-bisphosphate) contacts are provided by residues 23–30 (KGGLKYKA) and 49–57 (RLLHVKGRR). Residues 59–99 (VRATEVPLSWDSFNKGDCFIIDLGSEIYQWFGSSCNKYERL) form a Gelsolin-like 1 repeat.

The protein belongs to the villin/gelsolin family.

It localises to the cytoplasm. The protein resides in the cytoskeleton. Its subcellular location is the cell projection. It is found in the podosome. Functionally, ca(2+)-dependent actin filament-severing protein that has a regulatory function in exocytosis by affecting the organization of the microfilament network underneath the plasma membrane. In vitro, also has barbed end capping and nucleating activities in the presence of Ca(2+). Severing activity is inhibited by phosphatidylinositol 4,5-bis-phosphate (PIP2). Required for megakaryocyte differentiation, maturation, polyploidization and apoptosis with the release of platelet-like particles. Plays a role in osteoclastogenesis (OCG) and actin cytoskeletal organization in osteoclasts. Regulates chondrocyte proliferation and differentiation. Inhibits cell proliferation and tumorigenesis. Signaling is mediated by MAPK, p38 and JNK pathways. The chain is Scinderin (SCIN) from Sus scrofa (Pig).